The following is a 122-amino-acid chain: Small ribosomal subunit protein uS13 (122 aa).

Residues 95 to 122 (GLPVRGQRTHTNARTRKGPAKPIAGKKK) are disordered.

The protein belongs to the universal ribosomal protein uS13 family. As to quaternary structure, part of the 30S ribosomal subunit. Forms a loose heterodimer with protein S19. Forms two bridges to the 50S subunit in the 70S ribosome.

Located at the top of the head of the 30S subunit, it contacts several helices of the 16S rRNA. In the 70S ribosome it contacts the 23S rRNA (bridge B1a) and protein L5 of the 50S subunit (bridge B1b), connecting the 2 subunits; these bridges are implicated in subunit movement. Contacts the tRNAs in the A and P-sites. The sequence is that of Small ribosomal subunit protein uS13 from Xanthobacter autotrophicus (strain ATCC BAA-1158 / Py2).